Consider the following 296-residue polypeptide: 2-dehydropantoate 2-reductase (296 aa).

Residues 7 to 12 (GPGAVG), asparagine 94, and alanine 120 each bind NADP(+). Asparagine 94 is a substrate binding site. Lysine 175 functions as the Proton donor in the catalytic mechanism. 4 residues coordinate substrate: asparagine 179, asparagine 183, asparagine 193, and serine 245. Glutamate 257 is an NADP(+) binding site.

This sequence belongs to the ketopantoate reductase family.

The protein localises to the cytoplasm. It carries out the reaction (R)-pantoate + NADP(+) = 2-dehydropantoate + NADPH + H(+). It participates in cofactor biosynthesis; (R)-pantothenate biosynthesis; (R)-pantoate from 3-methyl-2-oxobutanoate: step 2/2. Functionally, catalyzes the NADPH-dependent reduction of ketopantoate into pantoic acid. This Vibrio cholerae serotype O1 (strain ATCC 39315 / El Tor Inaba N16961) protein is 2-dehydropantoate 2-reductase (panE).